The following is a 306-amino-acid chain: UDP-N-acetylenolpyruvoylglucosamine reductase (306 aa).

In terms of domain architecture, FAD-binding PCMH-type spans 28–193; sequence KVGGPADFLA…VSAKFSLKPG (166 aa). Residue Arg172 is part of the active site. The active-site Proton donor is Ser222. Glu292 is a catalytic residue.

Belongs to the MurB family. Requires FAD as cofactor.

The protein localises to the cytoplasm. It catalyses the reaction UDP-N-acetyl-alpha-D-muramate + NADP(+) = UDP-N-acetyl-3-O-(1-carboxyvinyl)-alpha-D-glucosamine + NADPH + H(+). The protein operates within cell wall biogenesis; peptidoglycan biosynthesis. In terms of biological role, cell wall formation. The polypeptide is UDP-N-acetylenolpyruvoylglucosamine reductase (Streptococcus mutans serotype c (strain ATCC 700610 / UA159)).